A 321-amino-acid chain; its full sequence is Ribose-phosphate pyrophosphokinase (321 aa).

Residues 44–46 (DGE) and 103–104 (RQ) each bind ATP. The Mg(2+) site is built by His137 and Asp179. Lys202 is a catalytic residue. Residues Arg204, Asp228, and 232–236 (DTAGT) contribute to the D-ribose 5-phosphate site.

It belongs to the ribose-phosphate pyrophosphokinase family. Class I subfamily. Homohexamer. Mg(2+) serves as cofactor.

It localises to the cytoplasm. It carries out the reaction D-ribose 5-phosphate + ATP = 5-phospho-alpha-D-ribose 1-diphosphate + AMP + H(+). Its pathway is metabolic intermediate biosynthesis; 5-phospho-alpha-D-ribose 1-diphosphate biosynthesis; 5-phospho-alpha-D-ribose 1-diphosphate from D-ribose 5-phosphate (route I): step 1/1. In terms of biological role, involved in the biosynthesis of the central metabolite phospho-alpha-D-ribosyl-1-pyrophosphate (PRPP) via the transfer of pyrophosphoryl group from ATP to 1-hydroxyl of ribose-5-phosphate (Rib-5-P). The sequence is that of Ribose-phosphate pyrophosphokinase from Staphylococcus aureus (strain Mu50 / ATCC 700699).